A 212-amino-acid chain; its full sequence is Ribonuclease HII (212 aa).

In terms of domain architecture, RNase H type-2 spans 24-212; that stretch reads QLVAGVDEVG…PVKKALGIEE (189 aa). Asp-30, Glu-31, and Asp-122 together coordinate a divalent metal cation.

This sequence belongs to the RNase HII family. Requires Mn(2+) as cofactor. The cofactor is Mg(2+).

The protein resides in the cytoplasm. The enzyme catalyses Endonucleolytic cleavage to 5'-phosphomonoester.. Endonuclease that specifically degrades the RNA of RNA-DNA hybrids. The chain is Ribonuclease HII from Vibrio campbellii (strain ATCC BAA-1116).